The sequence spans 414 residues: Enterobactin exporter EntS (414 aa).

Residues 1 to 21 (MNRQSWLLNLSLLKTHPAFRA) lie on the Cytoplasmic side of the membrane. Residues 22–42 (VFLARFISIVSLGLLGVAVPV) form a helical membrane-spanning segment. Over 43–55 (QIQMMTHSTWQVG) the chain is Periplasmic. A helical transmembrane segment spans residues 56–76 (LSVTLTGGAMFIGLMVGGVLA). At 77–83 (DRYERKK) the chain is on the cytoplasmic side. The helical transmembrane segment at 84-104 (VILLARGTCGIGFIGLCVNAL) threads the bilayer. The Periplasmic segment spans residues 105 to 109 (LPEPS). A helical transmembrane segment spans residues 110 to 130 (LLAIYLLGLWDGFFASLGVTA). The Cytoplasmic segment spans residues 131-156 (LLAATPALVGRENLMQAGAITMLTVR). Residues 157–177 (LGSVISPMLGGILLASGGVAW) traverse the membrane as a helical segment. Position 178 (Asn-178) is a topological domain, periplasmic. A helical membrane pass occupies residues 179 to 199 (YGLAAAGTFITLLPLLTLPRL). Over 200–218 (PVPPQPRENPFIALLAAFR) the chain is Cytoplasmic. A helical transmembrane segment spans residues 219–239 (FLLASPLIGGIALLGGLVTMA). The Periplasmic portion of the chain corresponds to 240-256 (SAVRVLYPALAMSWQMS). A helical transmembrane segment spans residues 257-277 (AAQIGLLYAAIPLGAAIGALT). The Cytoplasmic segment spans residues 278–287 (SGQLAHSVRP). A helical membrane pass occupies residues 288–307 (GLIMLVSTVGSFLAVGLFAI). At 308 to 313 (MPIWIA) the chain is on the periplasmic side. The helical transmembrane segment at 314–336 (GVICLALFGWLSAISSLLQYTLL) threads the bilayer. Topologically, residues 337 to 356 (QTQTPENMLGRMNGLWTAQN) are cytoplasmic. The helical transmembrane segment at 357-377 (VTGDAIGAALLGGLGAMMTPV) threads the bilayer. Ala-378 is a topological domain (periplasmic). Residues 379 to 399 (SASVSGFGLVIIGLLLLLVLG) traverse the membrane as a helical segment. The Cytoplasmic portion of the chain corresponds to 400 to 414 (ELRRFRQTPPVSDAG).

This sequence belongs to the major facilitator superfamily. EntS (TC 2.A.1.38) family.

Its subcellular location is the cell inner membrane. Its function is as follows. Component of an export pathway for enterobactin. The sequence is that of Enterobactin exporter EntS from Salmonella typhi.